The following is a 72-amino-acid chain: DNA-directed RNA polymerase subunit omega (72 aa).

It belongs to the RNA polymerase subunit omega family. As to quaternary structure, the RNAP catalytic core consists of 2 alpha, 1 beta, 1 beta' and 1 omega subunit. When a sigma factor is associated with the core the holoenzyme is formed, which can initiate transcription.

It carries out the reaction RNA(n) + a ribonucleoside 5'-triphosphate = RNA(n+1) + diphosphate. Functionally, promotes RNA polymerase assembly. Latches the N- and C-terminal regions of the beta' subunit thereby facilitating its interaction with the beta and alpha subunits. This Clostridium botulinum (strain Loch Maree / Type A3) protein is DNA-directed RNA polymerase subunit omega.